The following is a 207-amino-acid chain: Superoxide dismutase [Mn] (207 aa).

Residues H27, H82, D169, and H173 each coordinate Mn(2+).

The protein belongs to the iron/manganese superoxide dismutase family. Mn(2+) serves as cofactor.

The catalysed reaction is 2 superoxide + 2 H(+) = H2O2 + O2. In terms of biological role, destroys superoxide anion radicals which are normally produced within the cells and which are toxic to biological systems. In Yersinia enterocolitica, this protein is Superoxide dismutase [Mn] (sodA).